Here is a 313-residue protein sequence, read N- to C-terminus: Porphobilinogen deaminase (313 aa).

Position 242 is an S-(dipyrrolylmethanemethyl)cysteine (C242).

Belongs to the HMBS family. As to quaternary structure, monomer. The cofactor is dipyrromethane.

The catalysed reaction is 4 porphobilinogen + H2O = hydroxymethylbilane + 4 NH4(+). The protein operates within porphyrin-containing compound metabolism; protoporphyrin-IX biosynthesis; coproporphyrinogen-III from 5-aminolevulinate: step 2/4. In terms of biological role, tetrapolymerization of the monopyrrole PBG into the hydroxymethylbilane pre-uroporphyrinogen in several discrete steps. The sequence is that of Porphobilinogen deaminase from Pseudomonas paraeruginosa (strain DSM 24068 / PA7) (Pseudomonas aeruginosa (strain PA7)).